The primary structure comprises 106 residues: UPF0145 protein (106 aa).

The protein belongs to the UPF0145 family.

The polypeptide is UPF0145 protein (Listeria grayi (Listeria murrayi)).